The primary structure comprises 304 residues: Hairy/enhancer-of-split related with YRPW motif protein 1 (304 aa).

The interval 1 to 52 (MKRAHPDYSSSDSELDETVEVEKESADENGNLSSALGSMSPTTSSQILARKR) is disordered. A compositionally biased stretch (polar residues) spans 28-47 (ENGNLSSALGSMSPTTSSQI). The transcriptional repression and interaction with NCOR1 and SIN3A stretch occupies residues 48–117 (LARKRRRGII…GGKGYFDAHA (70 aa)). The region spanning 49 to 104 (ARKRRRGIIEKRRRDRINNSLSELRRLVPSAFEKQGSAKLEKAEILQMTVDHLKML) is the bHLH domain. The 37-residue stretch at 122-158 (YRSLGFRECLAEVARYLSIIEGLDASDPLRVRLVSHL) folds into the Orange domain. The interval 191–234 (AHPLLLPQSGHGNTGTSASPTDPHHQGRLAAAHPEAPALRAPPS) is disordered. Polar residues predominate over residues 200–210 (GHGNTGTSASP). Residues 218–234 (RLAAAHPEAPALRAPPS) are compositionally biased toward low complexity.

This sequence belongs to the HEY family. Self-associates. Interacts with HES1 and HEYL. Interacts with HDAC1, NCOR1 and SIN3A. Interacts with GATA4 and GATA6. Interacts with CCDC89/BOIP.

The protein resides in the nucleus. Transcriptional repressor which binds preferentially to the canonical E box sequence 5'-CACGTG-3'. Downstream effector of Notch signaling required for cardiovascular development. Specifically required for the Notch-induced endocardial epithelial to mesenchymal transition, which is itself criticial for cardiac valve and septum development. May be required in conjunction with HEY2 to specify arterial cell fate or identity. Promotes maintenance of neuronal precursor cells and glial versus neuronal fate specification. Represses transcription by the cardiac transcriptional activators GATA4 and GATA6 and by the neuronal bHLH factors ASCL1/MASH1 and NEUROD4/MATH3. In Canis lupus familiaris (Dog), this protein is Hairy/enhancer-of-split related with YRPW motif protein 1 (HEY1).